Consider the following 184-residue polypeptide: Flavin prenyltransferase UbiX (184 aa).

FMN is bound by residues 9 to 11 (GAS), S34, 85 to 88 (SMKT), and R120. The dimethylallyl phosphate site is built by Y150 and R166.

This sequence belongs to the UbiX/PAD1 family.

It carries out the reaction dimethylallyl phosphate + FMNH2 = prenylated FMNH2 + phosphate. Flavin prenyltransferase that catalyzes the synthesis of the prenylated FMN cofactor (prenyl-FMN) for 4-hydroxy-3-polyprenylbenzoic acid decarboxylase UbiD. The prenyltransferase is metal-independent and links a dimethylallyl moiety from dimethylallyl monophosphate (DMAP) to the flavin N5 and C6 atoms of FMN. In Methanocaldococcus jannaschii (strain ATCC 43067 / DSM 2661 / JAL-1 / JCM 10045 / NBRC 100440) (Methanococcus jannaschii), this protein is Flavin prenyltransferase UbiX.